A 297-amino-acid chain; its full sequence is 4-hydroxy-tetrahydrodipicolinate synthase (297 aa).

Residue Thr50 coordinates pyruvate. Tyr138 (proton donor/acceptor) is an active-site residue. Residue Lys166 is the Schiff-base intermediate with substrate of the active site. Ile208 contributes to the pyruvate binding site.

The protein belongs to the DapA family. As to quaternary structure, homotetramer; dimer of dimers.

The protein resides in the cytoplasm. It catalyses the reaction L-aspartate 4-semialdehyde + pyruvate = (2S,4S)-4-hydroxy-2,3,4,5-tetrahydrodipicolinate + H2O + H(+). It participates in amino-acid biosynthesis; L-lysine biosynthesis via DAP pathway; (S)-tetrahydrodipicolinate from L-aspartate: step 3/4. In terms of biological role, catalyzes the condensation of (S)-aspartate-beta-semialdehyde [(S)-ASA] and pyruvate to 4-hydroxy-tetrahydrodipicolinate (HTPA). The chain is 4-hydroxy-tetrahydrodipicolinate synthase from Desulfotalea psychrophila (strain LSv54 / DSM 12343).